The following is a 196-amino-acid chain: Glycerol-3-phosphate acyltransferase (196 aa).

The next 4 helical transmembrane spans lie at 5–25 (GLIA…MILT), 70–90 (VVIA…LGAF), 111–131 (IGVL…IWLL), and 152–172 (LLLW…LTVL).

Belongs to the PlsY family. Probably interacts with PlsX.

The protein localises to the cell inner membrane. It catalyses the reaction an acyl phosphate + sn-glycerol 3-phosphate = a 1-acyl-sn-glycero-3-phosphate + phosphate. The protein operates within lipid metabolism; phospholipid metabolism. Catalyzes the transfer of an acyl group from acyl-phosphate (acyl-PO(4)) to glycerol-3-phosphate (G3P) to form lysophosphatidic acid (LPA). This enzyme utilizes acyl-phosphate as fatty acyl donor, but not acyl-CoA or acyl-ACP. The sequence is that of Glycerol-3-phosphate acyltransferase from Nitrobacter winogradskyi (strain ATCC 25391 / DSM 10237 / CIP 104748 / NCIMB 11846 / Nb-255).